Here is a 579-residue protein sequence, read N- to C-terminus: Chromosomal replication initiator protein DnaA (579 aa).

The domain I, interacts with DnaA modulators stretch occupies residues 1-71; sequence MQDFWQAAAA…TALACEYWET (71 aa). Residues 71-242 are domain II; that stretch reads TQVSVHFVLD…QQSDTVHERS (172 aa). 2 disordered regions span residues 131–196 and 212–240; these read AGAQ…SAAH and EASARSYRVPSPQPAAPAGAQQQSDTVHE. Over residues 171 to 183 the composition is skewed to low complexity; it reads SQSQQSAQGRGAA. Residues 243-459 form a domain III, AAA+ region region; that stretch reads RLNPILTFDN…GALRKILAFS (217 aa). Gly-287, Gly-289, Lys-290, and Thr-291 together coordinate ATP. The segment at 460–579 is domain IV, binds dsDNA; sequence NFHGKDITID…LHVLEQTLKG (120 aa).

Belongs to the DnaA family. Oligomerizes as a right-handed, spiral filament on DNA at oriC.

It localises to the cytoplasm. In terms of biological role, plays an essential role in the initiation and regulation of chromosomal replication. ATP-DnaA binds to the origin of replication (oriC) to initiate formation of the DNA replication initiation complex once per cell cycle. Binds the DnaA box (a 9 base pair repeat at the origin) and separates the double-stranded (ds)DNA. Forms a right-handed helical filament on oriC DNA; dsDNA binds to the exterior of the filament while single-stranded (ss)DNA is stabiized in the filament's interior. The ATP-DnaA-oriC complex binds and stabilizes one strand of the AT-rich DNA unwinding element (DUE), permitting loading of DNA polymerase. After initiation quickly degrades to an ADP-DnaA complex that is not apt for DNA replication. Binds acidic phospholipids. The protein is Chromosomal replication initiator protein DnaA of Cupriavidus metallidurans (strain ATCC 43123 / DSM 2839 / NBRC 102507 / CH34) (Ralstonia metallidurans).